The following is a 179-amino-acid chain: Protein GrpE (179 aa).

The segment at 1-22 is disordered; that stretch reads MTDNNIENNEEEIRKAPSANDR. Over residues 11–22 the composition is skewed to basic and acidic residues; that stretch reads EEIRKAPSANDR.

It belongs to the GrpE family. In terms of assembly, homodimer.

It is found in the cytoplasm. Participates actively in the response to hyperosmotic and heat shock by preventing the aggregation of stress-denatured proteins, in association with DnaK and GrpE. It is the nucleotide exchange factor for DnaK and may function as a thermosensor. Unfolded proteins bind initially to DnaJ; upon interaction with the DnaJ-bound protein, DnaK hydrolyzes its bound ATP, resulting in the formation of a stable complex. GrpE releases ADP from DnaK; ATP binding to DnaK triggers the release of the substrate protein, thus completing the reaction cycle. Several rounds of ATP-dependent interactions between DnaJ, DnaK and GrpE are required for fully efficient folding. This is Protein GrpE from Rickettsia canadensis (strain McKiel).